The primary structure comprises 273 residues: Undecaprenyl-diphosphatase (273 aa).

The next 7 helical transmembrane spans lie at Phe4 to Ile24, Lys43 to Tyr63, Phe83 to Lys103, Leu109 to Ala129, Ala184 to Leu204, Val218 to Leu238, and Val248 to Met268.

The protein belongs to the UppP family.

The protein resides in the cell inner membrane. The catalysed reaction is di-trans,octa-cis-undecaprenyl diphosphate + H2O = di-trans,octa-cis-undecaprenyl phosphate + phosphate + H(+). In terms of biological role, catalyzes the dephosphorylation of undecaprenyl diphosphate (UPP). Confers resistance to bacitracin. This Nitrosospira multiformis (strain ATCC 25196 / NCIMB 11849 / C 71) protein is Undecaprenyl-diphosphatase.